Here is a 683-residue protein sequence, read N- to C-terminus: Leucine-rich repeat and calponin homology domain-containing protein 4 (683 aa).

A compositionally biased stretch (low complexity) spans 1–18; that stretch reads MAAAVAAPLAAGGEEAAA. Positions 1–34 are disordered; it reads MAAAVAAPLAAGGEEAAATTSVPGSPGLPGRRSA. LRR repeat units lie at residues 41 to 64, 67 to 90, 92 to 113, 114 to 136, 138 to 158, 159 to 181, 182 to 204, 206 to 226, and 227 to 250; these read AVAT…AARS, LSDI…ACQL, SLEG…LGNL, TALT…ICQL, LRVL…IGTL, GSLR…LCGL, SSLR…LGDL, LVRL…FCRL, and RHLQ…CLKG. A disordered region spans residues 268 to 292; it reads ALGDLAPSRPPSFSPCPAEDLFPGH. 6 positions are modified to phosphoserine: serine 279, serine 281, serine 304, serine 307, serine 309, and serine 313. Disordered stretches follow at residues 326–436 and 449–539; these read FRIS…LLKP and STQA…DEKD. 3 stretches are compositionally biased toward basic and acidic residues: residues 330-345, 357-376, and 384-418; these read ELAR…KEDG, IDSH…EQRP, and GDRE…ERRQ. Serine 432 and serine 457 each carry phosphoserine. Residues 449 to 460 are compositionally biased toward polar residues; that stretch reads STQAMHNGSPKS. Low complexity-rich tracts occupy residues 461–481 and 511–524; these read SASQ…PASQ and SSSQ…SPDS. 5 positions are modified to phosphoserine: serine 511, serine 513, serine 517, serine 521, and serine 589. Positions 534–647 constitute a Calponin-homology (CH) domain; sequence VPDEKDLMTQ…ALEAVKRVGG (114 aa). Residues 653-673 form a helical membrane-spanning segment; it reads LWPPSGLGGFVVFYVVLMLLL.

It is found in the cell membrane. Its function is as follows. Accessory protein that regulates signaling by multiple TLRs, acting as a broad-spanning regulator of the innate immune response. In macrophages, binds LPS and promotes proper docking of LPS in lipid raft membrane. May be required for lipid raft maintenance. This chain is Leucine-rich repeat and calponin homology domain-containing protein 4, found in Homo sapiens (Human).